A 361-amino-acid polypeptide reads, in one-letter code: Solute carrier family 25 member 3 (361 aa).

A mitochondrion-targeting transit peptide spans 1–49 (MFSSVAHLARANPFNTPHLQLVHDGLGDFRSRPPGPTGQPRRPRNLAAA). A disordered region spans residues 25–44 (GLGDFRSRPPGPTGQPRRPR). At 50–62 (AVEEYSCEFGSAK) the chain is on the mitochondrial intermembrane side. Solcar repeat units follow at residues 62–146 (KYYA…FKVL), 159–243 (WRTS…TVEA), and 260–338 (EQLV…VKVY). Residues 63-85 (YYALCGFGGVLSCGLTHTAVVPL) traverse the membrane as a helical segment. Topologically, residues 86–120 (DLVKCRMQVDPQKYKGIFNGFSVTLKEDGVRGLAK) are mitochondrial matrix. Lysine 98 is subject to N6-acetyllysine. Lysine 111 is subject to N6-methyllysine. A helical membrane pass occupies residues 121 to 140 (GWAPTFLGYSMQGLCKFGFY). Residues 141 to 160 (EVFKVLYSNMLGEENTYLWR) lie on the Mitochondrial intermembrane side of the membrane. The helical transmembrane segment at 161–182 (TSLYLAASASAEFFADIALAPM) threads the bilayer. Residues 183–217 (EAAKVRIQTQPGYANTLRDAAPKMYKEEGLKAFYK) lie on the Mitochondrial matrix side of the membrane. Tyrosine 195 is modified (phosphotyrosine). Lysine 208 carries the N6-acetyllysine modification. A helical membrane pass occupies residues 218-237 (GVAPLWMRQIPYTMMKFACF). The Mitochondrial intermembrane segment spans residues 238–260 (ERTVEALYKFVVPKPRSECSKPE). The helical transmembrane segment at 261-283 (QLVVTFVAGYIAGVFCAIVSHPA) threads the bilayer. The Mitochondrial matrix segment spans residues 284–313 (DSVVSVLNKEKGSSASLVLKRLGFKGVWKG). The chain crosses the membrane as a helical span at residues 314-332 (LFARIIMIGTLTALQWFIY). Residues 333 to 361 (DSVKVYFRLPRPPPPEMPESLKKKLGLTQ) lie on the Mitochondrial intermembrane side of the membrane.

Belongs to the mitochondrial carrier (TC 2.A.29) family. As to quaternary structure, interacts with PPIF; the interaction is impaired by CsA.

It is found in the mitochondrion inner membrane. It carries out the reaction phosphate(in) + H(+)(in) = phosphate(out) + H(+)(out). Its function is as follows. Inorganic ion transporter that transports phosphate or copper ions across the mitochondrial inner membrane into the matrix compartment. Mediates proton-coupled symport of phosphate ions necessary for mitochondrial oxidative phosphorylation of ADP to ATP. Transports copper ions probably in the form of anionic copper(I) complexes to maintain mitochondrial matrix copper pool and to supply copper for cytochrome C oxidase complex assembly. May also play a role in regulation of the mitochondrial permeability transition pore (mPTP). The chain is Solute carrier family 25 member 3 from Pongo abelii (Sumatran orangutan).